We begin with the raw amino-acid sequence, 321 residues long: Lipoyl synthase (321 aa).

Cys68, Cys73, Cys79, Cys94, Cys98, Cys101, and Ser308 together coordinate [4Fe-4S] cluster. The region spanning 80 to 297 is the Radical SAM core domain; that stretch reads FNHGTATFMI…KEEALAMGFT (218 aa).

This sequence belongs to the radical SAM superfamily. Lipoyl synthase family. [4Fe-4S] cluster is required as a cofactor.

Its subcellular location is the cytoplasm. The catalysed reaction is [[Fe-S] cluster scaffold protein carrying a second [4Fe-4S](2+) cluster] + N(6)-octanoyl-L-lysyl-[protein] + 2 oxidized [2Fe-2S]-[ferredoxin] + 2 S-adenosyl-L-methionine + 4 H(+) = [[Fe-S] cluster scaffold protein] + N(6)-[(R)-dihydrolipoyl]-L-lysyl-[protein] + 4 Fe(3+) + 2 hydrogen sulfide + 2 5'-deoxyadenosine + 2 L-methionine + 2 reduced [2Fe-2S]-[ferredoxin]. The protein operates within protein modification; protein lipoylation via endogenous pathway; protein N(6)-(lipoyl)lysine from octanoyl-[acyl-carrier-protein]: step 2/2. Catalyzes the radical-mediated insertion of two sulfur atoms into the C-6 and C-8 positions of the octanoyl moiety bound to the lipoyl domains of lipoate-dependent enzymes, thereby converting the octanoylated domains into lipoylated derivatives. The chain is Lipoyl synthase from Photorhabdus laumondii subsp. laumondii (strain DSM 15139 / CIP 105565 / TT01) (Photorhabdus luminescens subsp. laumondii).